The chain runs to 298 residues: Pyridoxal kinase PdxY (298 aa).

A substrate-binding site is contributed by Ser17. Positions 119 and 156 each coordinate ATP. Asp234 is a binding site for substrate.

The protein belongs to the pyridoxine kinase family. PdxY subfamily. In terms of assembly, homodimer. It depends on Mg(2+) as a cofactor.

It catalyses the reaction pyridoxal + ATP = pyridoxal 5'-phosphate + ADP + H(+). It functions in the pathway cofactor metabolism; pyridoxal 5'-phosphate salvage; pyridoxal 5'-phosphate from pyridoxal: step 1/1. Its function is as follows. Pyridoxal kinase involved in the salvage pathway of pyridoxal 5'-phosphate (PLP). Catalyzes the phosphorylation of pyridoxal to PLP. The chain is Pyridoxal kinase PdxY from Deinococcus radiodurans (strain ATCC 13939 / DSM 20539 / JCM 16871 / CCUG 27074 / LMG 4051 / NBRC 15346 / NCIMB 9279 / VKM B-1422 / R1).